The chain runs to 231 residues: Large ribosomal subunit protein uL1 (231 aa).

The protein belongs to the universal ribosomal protein uL1 family. Part of the 50S ribosomal subunit.

Its function is as follows. Binds directly to 23S rRNA. The L1 stalk is quite mobile in the ribosome, and is involved in E site tRNA release. Functionally, protein L1 is also a translational repressor protein, it controls the translation of the L11 operon by binding to its mRNA. This chain is Large ribosomal subunit protein uL1, found in Verminephrobacter eiseniae (strain EF01-2).